The chain runs to 134 residues: Aspartate 1-decarboxylase (134 aa).

The Schiff-base intermediate with substrate; via pyruvic acid role is filled by serine 25. Position 25 is a pyruvic acid (Ser) (serine 25). Threonine 57 serves as a coordination point for substrate. Tyrosine 58 functions as the Proton donor in the catalytic mechanism. A substrate-binding site is contributed by 73–75 (GAA).

Belongs to the PanD family. As to quaternary structure, heterooctamer of four alpha and four beta subunits. Requires pyruvate as cofactor. Is synthesized initially as an inactive proenzyme, which is activated by self-cleavage at a specific serine bond to produce a beta-subunit with a hydroxyl group at its C-terminus and an alpha-subunit with a pyruvoyl group at its N-terminus.

The protein localises to the cytoplasm. It carries out the reaction L-aspartate + H(+) = beta-alanine + CO2. Its pathway is cofactor biosynthesis; (R)-pantothenate biosynthesis; beta-alanine from L-aspartate: step 1/1. Its function is as follows. Catalyzes the pyruvoyl-dependent decarboxylation of aspartate to produce beta-alanine. The chain is Aspartate 1-decarboxylase from Citrifermentans bemidjiense (strain ATCC BAA-1014 / DSM 16622 / JCM 12645 / Bem) (Geobacter bemidjiensis).